The following is a 172-amino-acid chain: uncharacterized protein (172 aa).

This is an uncharacterized protein from Mycoplasma pneumoniae (strain ATCC 29342 / M129 / Subtype 1) (Mycoplasmoides pneumoniae).